A 215-amino-acid chain; its full sequence is Octanoyltransferase (215 aa).

Positions 31-206 (TTAPDEIWLV…QLVKHLDYAE (176 aa)) constitute a BPL/LPL catalytic domain. Substrate-binding positions include 70-77 (RGGQVTYH), 137-139 (SLG), and 150-152 (GLA). Residue C168 is the Acyl-thioester intermediate of the active site.

This sequence belongs to the LipB family.

Its subcellular location is the cytoplasm. It catalyses the reaction octanoyl-[ACP] + L-lysyl-[protein] = N(6)-octanoyl-L-lysyl-[protein] + holo-[ACP] + H(+). The protein operates within protein modification; protein lipoylation via endogenous pathway; protein N(6)-(lipoyl)lysine from octanoyl-[acyl-carrier-protein]: step 1/2. Its function is as follows. Catalyzes the transfer of endogenously produced octanoic acid from octanoyl-acyl-carrier-protein onto the lipoyl domains of lipoate-dependent enzymes. Lipoyl-ACP can also act as a substrate although octanoyl-ACP is likely to be the physiological substrate. This is Octanoyltransferase from Pseudomonas fluorescens (strain Pf0-1).